Consider the following 37-residue polypeptide: Large ribosomal subunit protein bL36 (37 aa).

Belongs to the bacterial ribosomal protein bL36 family.

The protein is Large ribosomal subunit protein bL36 of Nitratidesulfovibrio vulgaris (strain DSM 19637 / Miyazaki F) (Desulfovibrio vulgaris).